Reading from the N-terminus, the 623-residue chain is Heterogeneous nuclear ribonucleoprotein Q (623 aa).

N-acetylalanine is present on alanine 2. A Phosphoserine modification is found at serine 159. 3 consecutive RRM domains span residues 162–241 (TEIF…ISVA), 243–325 (NRLF…WADP), and 338–408 (KVLF…FAKP). Lysine 168 is covalently cross-linked (Glycyl lysine isopeptide (Lys-Gly) (interchain with G-Cter in SUMO2)). Lysine 221 is subject to N6-acetyllysine. The residue at position 363 (lysine 363) is an N6-acetyllysine. Tyrosine 373 is modified (phosphotyrosine). The segment at 400–561 (NIEIVFAKPP…GARGGRGGNV (162 aa)) is interaction with APOBEC1. Arginine 444 is modified (asymmetric dimethylarginine; by PRMT1; alternate). Omega-N-methylarginine; by PRMT1; alternate is present on arginine 444. Repeat copies occupy residues 448–450 (RGG), 451–453 (RGG), 460–464 (YYGYE), 469–472 (YYGY), 478–480 (RGG), and 485–488 (YYGY). The interval 448-559 (RGGRGGYGYP…VRGARGGRGG (112 aa)) is 8 X 3 AA repeats of R-G-G. The tract at residues 460 to 488 (YYGYEDYYDYYGYDYHNYRGGYEDPYYGY) is 3 X 4 AA repeats of Y-Y-G-Y. Arginine 496 carries the omega-N-methylarginine; by PRMT1 modification. The disordered stretch occupies residues 497–623 (GRGGRGARGA…YQDTFGQQWK (127 aa)). One copy of the 1-4 repeat lies at 498 to 500 (RGG). The span at 504 to 522 (RGAAPSRGRGAAPPRGRAG) shows a compositional bias: low complexity. Residue arginine 510 is modified to Asymmetric dimethylarginine; by PRMT1. At arginine 518 the chain carries Asymmetric dimethylarginine; by PRMT1; alternate. Position 518 is an omega-N-methylarginine; by PRMT1; alternate (arginine 518). Positions 518-549 (RGRAGYSQRGGPGSARGVRGARGGAQQQRGRG) are interaction with SMN. Arginine 526 bears the Asymmetric dimethylarginine; alternate mark. Position 526 is an omega-N-methylarginine; alternate (arginine 526). One copy of the 1-5 repeat lies at 526–528 (RGG). Residues arginine 536 and arginine 539 each carry the asymmetric dimethylarginine; by PRMT1; alternate modification. Residues arginine 536 and arginine 539 each carry the omega-N-methylarginine; by PRMT1; alternate modification. 3 repeat units span residues 539 to 541 (RGG), 554 to 556 (RGG), and 557 to 559 (RGG). The span at 550 to 562 (VRGARGGRGGNVG) shows a compositional bias: gly residues. The short motif at 564-578 (KRKADGYNQPDTKRR) is the Bipartite nuclear localization signal element. The span at 580 to 595 (TNNQNWGSQPIAQQPL) shows a compositional bias: polar residues. Position 587 is a phosphoserine (serine 587). Lysine 607 participates in a covalent cross-link: Glycyl lysine isopeptide (Lys-Gly) (interchain with G-Cter in SUMO2). Polar residues predominate over residues 611–623 (QEFYQDTFGQQWK).

Identified in the spliceosome C complex. Component of the coding region determinant (CRD)-mediated complex, composed of DHX9, HNRNPU, IGF2BP1, SYNCRIP and YBX1. Identified in a mRNP complex, at least composed of DHX9, DDX3X, ELAVL1, HNRNPU, IGF2BP1, ILF3, PABPC1, PCBP2, PTBP2, STAU1, STAU2, SYNCRIP and YBX1. Identified in a mRNP granule complex, at least composed of ACTB, ACTN4, DHX9, ERG, HNRNPA1, HNRNPA2B1, HNRNPAB, HNRNPD, HNRNPL, HNRNPR, HNRNPU, HSPA1, HSPA8, IGF2BP1, ILF2, ILF3, NCBP1, NCL, PABPC1, PABPC4, PABPN1, RPLP0, RPS3, RPS3A, RPS4X, RPS8, RPS9, SYNCRIP, YBX1 and untranslated mRNAs. Interacts with GTPBP1. Isoform 1 is a component of the APOB mRNA editosome complex. Isoform 1 interacts with APOBEC1 and A1CF. Part of a complex associated with the FOS mCRD domain and consisting of PABPC1, PAIP1, CSDE1/UNR, HNRPD and SYNCRIP. Isoform 2 interacts with HNRPR. Interacts with POLR2A hyperphosphorylated C-terminal domain. Interacts with HABP4. Identified in a histone pre-mRNA complex, at least composed of ERI1, LSM11, SLBP, SNRPB, SYNCRIP and YBX1. Isoform 1 and isoform 2 interact with SMN. Isoform 2 interacts through its C-terminal domain with SYT7, SYT8 and SYT9. The non-phosphorylated and phosphorylated forms are colocalized with PAIP1 in polysomes. In terms of processing, phosphorylated on tyrosine. The membrane-bound form found in microsomes is phosphorylated in vitro by insulin receptor tyrosine kinase (INSR). Phosphorylation is inhibited upon binding to RNA, whereas the cytoplasmic form is poorly phosphorylated. In terms of tissue distribution, ubiquitous. Detected in heart, brain, spleen, lung, liver, skeletal muscle, adipocytes, kidney and testis.

Its subcellular location is the nucleus. The protein resides in the nucleoplasm. It is found in the microsome. It localises to the cytoplasm. Functionally, heterogeneous nuclear ribonucleoprotein (hnRNP) implicated in mRNA processing mechanisms. Component of the CRD-mediated complex that promotes MYC mRNA stability. Isoform 1 and isoform 2 are associated in vitro with pre-mRNA, splicing intermediates and mature mRNA protein complexes. Isoform 1 binds to apoB mRNA AU-rich sequences. Isoform 1 is part of the APOB mRNA editosome complex and may modulate the postranscriptional C to U RNA-editing of the APOB mRNA through either by binding to A1CF (APOBEC1 complementation factor), to APOBEC1 or to RNA itself. May be involved in translationally coupled mRNA turnover. Implicated with other RNA-binding proteins in the cytoplasmic deadenylation/translational and decay interplay of the FOS mRNA mediated by the major coding-region determinant of instability (mCRD) domain. Interacts in vitro preferentially with poly(A) and poly(U) RNA sequences. Isoform 2 may be involved in cytoplasmic vesicle-based mRNA transport through interaction with synaptotagmins. The polypeptide is Heterogeneous nuclear ribonucleoprotein Q (Syncrip) (Mus musculus (Mouse)).